The sequence spans 161 residues: Large ribosomal subunit protein uL16 (161 aa).

Positions 140 to 161 (LNKGNYKPAKTPVTADDSESSS) are disordered.

The protein belongs to the universal ribosomal protein uL16 family. Part of the 50S ribosomal subunit.

Its function is as follows. Binds 23S rRNA and is also seen to make contacts with the A and possibly P site tRNAs. In Prochlorococcus marinus (strain NATL2A), this protein is Large ribosomal subunit protein uL16.